Here is a 306-residue protein sequence, read N- to C-terminus: Putative S-adenosyl-L-methionine-dependent methyltransferase FRAAL5401 (306 aa).

Residues Asp126 and 155-156 (DL) each bind S-adenosyl-L-methionine. Positions 201-225 (LSAPESRVATENRPNPKPGDEDRTK) are disordered.

This sequence belongs to the UPF0677 family.

In terms of biological role, exhibits S-adenosyl-L-methionine-dependent methyltransferase activity. In Frankia alni (strain DSM 45986 / CECT 9034 / ACN14a), this protein is Putative S-adenosyl-L-methionine-dependent methyltransferase FRAAL5401.